The primary structure comprises 416 residues: Phosphoglycerate kinase (416 aa).

Residues valine 23, aspartate 24, phenylalanine 25, asparagine 26, glutamine 38, arginine 39, serine 62, histidine 63, glycine 65, arginine 66, leucine 121, arginine 122, histidine 168, and arginine 169 each coordinate (2R)-3-phosphoglycerate. Glycine 212 is an ADP binding site. Residue glycine 212 coordinates CDP. 2 residues coordinate AMP: alanine 213 and lysine 214. Alanine 213 provides a ligand contact to ATP. Alanine 213 serves as a coordination point for Mg(2+). Aspartate 217 lines the CDP pocket. Position 217 (aspartate 217) interacts with Mg(2+). AMP is bound at residue lysine 218. Lysine 218 is an ATP binding site. Residue glycine 236 participates in ADP binding. Glycine 236 lines the CDP pocket. The AMP site is built by glycine 237 and glycine 311. The ATP site is built by glycine 237 and glycine 311. CDP contacts are provided by glycine 336 and phenylalanine 341. Phenylalanine 341 contributes to the ADP binding site. An AMP-binding site is contributed by glutamate 342. ATP is bound by residues glutamate 342, aspartate 373, and threonine 374. Residue aspartate 373 participates in Mg(2+) binding.

This sequence belongs to the phosphoglycerate kinase family. In terms of assembly, monomer. It depends on Mg(2+) as a cofactor.

It localises to the cytoplasm. It is found in the mitochondrion. The catalysed reaction is (2R)-3-phosphoglycerate + ATP = (2R)-3-phospho-glyceroyl phosphate + ADP. It participates in carbohydrate degradation; glycolysis; pyruvate from D-glyceraldehyde 3-phosphate: step 2/5. Functionally, catalyzes one of the two ATP producing reactions in the glycolytic pathway via the reversible conversion of 1,3-diphosphoglycerate to 3-phosphoglycerate. Both L- and D- forms of purine and pyrimidine nucleotides can be used as substrates, but the activity is much lower on pyrimidines. Negatively regulates the biosynthesis of acetyl-CoA from pyruvate in the mitochondrion. The chain is Phosphoglycerate kinase (PGK1) from Debaryomyces hansenii (strain ATCC 36239 / CBS 767 / BCRC 21394 / JCM 1990 / NBRC 0083 / IGC 2968) (Yeast).